The following is a 556-amino-acid chain: Glutamine--tRNA ligase (556 aa).

A 'HIGH' region motif is present at residues 39 to 49 (PEPNGYLHIGH). Residues 40–42 (EPN) and 46–52 (HIGHAKS) each bind ATP. Residues D72 and Y217 each coordinate L-glutamine. Residues T236 and 267-268 (RL) each bind ATP. Positions 274-278 (LTSKR) match the 'KMSKS' region motif.

The protein belongs to the class-I aminoacyl-tRNA synthetase family. In terms of assembly, monomer.

Its subcellular location is the cytoplasm. It catalyses the reaction tRNA(Gln) + L-glutamine + ATP = L-glutaminyl-tRNA(Gln) + AMP + diphosphate. In Haemophilus ducreyi (strain 35000HP / ATCC 700724), this protein is Glutamine--tRNA ligase.